Here is a 1390-residue protein sequence, read N- to C-terminus: DNA-directed RNA polymerase subunit beta'' (1390 aa).

The Zn(2+) site is built by C220, C291, C298, and C301.

The protein belongs to the RNA polymerase beta' chain family. RpoC2 subfamily. In plastids the minimal PEP RNA polymerase catalytic core is composed of four subunits: alpha, beta, beta', and beta''. When a (nuclear-encoded) sigma factor is associated with the core the holoenzyme is formed, which can initiate transcription. It depends on Zn(2+) as a cofactor.

It localises to the plastid. The protein localises to the chloroplast. The catalysed reaction is RNA(n) + a ribonucleoside 5'-triphosphate = RNA(n+1) + diphosphate. Functionally, DNA-dependent RNA polymerase catalyzes the transcription of DNA into RNA using the four ribonucleoside triphosphates as substrates. The protein is DNA-directed RNA polymerase subunit beta'' of Populus alba (White poplar).